Consider the following 418-residue polypeptide: Phosphoglycerate kinase (418 aa).

Positions 24, 25, 26, 27, 40, 63, 64, 66, 67, 122, 123, 169, and 170 each coordinate (2R)-3-phosphoglycerate. Residue G213 participates in ADP binding. Residue G213 coordinates CDP. 2 residues coordinate AMP: A214 and K215. A214 contacts ATP. A214 provides a ligand contact to Mg(2+). Mg(2+) contacts are provided by A217 and D218. D218 provides a ligand contact to CDP. K219 is an AMP binding site. K219 is a binding site for ATP. ADP is bound at residue G237. G237 contributes to the CDP binding site. G238 and G312 together coordinate AMP. ATP contacts are provided by G238 and G312. Residues G337 and F342 each coordinate CDP. F342 contributes to the ADP binding site. E343 is a binding site for AMP. E343, D374, and T375 together coordinate ATP. Residue D374 coordinates Mg(2+).

Belongs to the phosphoglycerate kinase family. Monomer. Requires Mg(2+) as cofactor.

The enzyme catalyses (2R)-3-phosphoglycerate + ATP = (2R)-3-phospho-glyceroyl phosphate + ADP. It functions in the pathway carbohydrate degradation; glycolysis; pyruvate from D-glyceraldehyde 3-phosphate: step 2/5. This chain is Phosphoglycerate kinase (PGK), found in Euplotes crassus.